The sequence spans 485 residues: Glutamate--tRNA ligase (485 aa).

The 'HIGH' region motif lies at 11–21 (PSPTGHLHIGG). The 'KMSKS' region motif lies at 252-256 (KMSKR). An ATP-binding site is contributed by K255.

Belongs to the class-I aminoacyl-tRNA synthetase family. Glutamate--tRNA ligase type 1 subfamily. As to quaternary structure, monomer.

Its subcellular location is the cytoplasm. It carries out the reaction tRNA(Glu) + L-glutamate + ATP = L-glutamyl-tRNA(Glu) + AMP + diphosphate. In terms of biological role, catalyzes the attachment of glutamate to tRNA(Glu) in a two-step reaction: glutamate is first activated by ATP to form Glu-AMP and then transferred to the acceptor end of tRNA(Glu). This is Glutamate--tRNA ligase from Halalkalibacterium halodurans (strain ATCC BAA-125 / DSM 18197 / FERM 7344 / JCM 9153 / C-125) (Bacillus halodurans).